A 464-amino-acid chain; its full sequence is Light-independent protochlorophyllide reductase subunit N (464 aa).

Residues C29, C54, and C114 each coordinate [4Fe-4S] cluster.

The protein belongs to the BchN/ChlN family. As to quaternary structure, protochlorophyllide reductase is composed of three subunits; ChlL, ChlN and ChlB. Forms a heterotetramer of two ChlB and two ChlN subunits. [4Fe-4S] cluster serves as cofactor.

It localises to the plastid. Its subcellular location is the chloroplast. The enzyme catalyses chlorophyllide a + oxidized 2[4Fe-4S]-[ferredoxin] + 2 ADP + 2 phosphate = protochlorophyllide a + reduced 2[4Fe-4S]-[ferredoxin] + 2 ATP + 2 H2O. It functions in the pathway porphyrin-containing compound metabolism; chlorophyll biosynthesis (light-independent). Functionally, component of the dark-operative protochlorophyllide reductase (DPOR) that uses Mg-ATP and reduced ferredoxin to reduce ring D of protochlorophyllide (Pchlide) to form chlorophyllide a (Chlide). This reaction is light-independent. The NB-protein (ChlN-ChlB) is the catalytic component of the complex. The sequence is that of Light-independent protochlorophyllide reductase subunit N from Stigeoclonium helveticum (Green alga).